The chain runs to 525 residues: GMP synthase [glutamine-hydrolyzing] (525 aa).

The Glutamine amidotransferase type-1 domain occupies 13–202 (TILVLDFGSQ…AVEICQAAQT (190 aa)). Residue Cys-89 is the Nucleophile of the active site. Catalysis depends on residues His-176 and Glu-178. Positions 203-400 (WTMENFIDTE…LGISHELVWR (198 aa)) constitute a GMPS ATP-PPase domain. 231–237 (SGGVDST) is a binding site for ATP. XMP-binding residues include Arg-304, Asp-462, Lys-517, and Glu-523.

In terms of assembly, homodimer. Mg(2+) is required as a cofactor.

The protein localises to the cytoplasm. It is found in the cytosol. The catalysed reaction is XMP + L-glutamine + ATP + H2O = GMP + L-glutamate + AMP + diphosphate + 2 H(+). It functions in the pathway purine metabolism; GMP biosynthesis; GMP from XMP (L-Gln route): step 1/1. Its function is as follows. Catalyzes the conversion of xanthine monophosphate (XMP) to GMP in the presence of glutamine and ATP through an adenyl-XMP intermediate. The protein is GMP synthase [glutamine-hydrolyzing] (GUA1) of Eremothecium gossypii (strain ATCC 10895 / CBS 109.51 / FGSC 9923 / NRRL Y-1056) (Yeast).